Reading from the N-terminus, the 306-residue chain is Reaction center protein M chain (306 aa).

Transmembrane regions (helical) follow at residues 53-79, 111-140, and 143-168; these read GTTG…ASVN, GGWW…RALK, and THTA…LLMG. Residues H181 and H201 each contribute to the (7R,8Z)-bacteriochlorophyll b site. Residues 198 to 226 traverse the membrane as a helical segment; sequence NPFHMLSIAFLYGSALLSAMHGATILAVS. H218 and E233 together coordinate Fe cation. W251 contributes to the a ubiquinone binding site. A helical membrane pass occupies residues 260 to 286; it reads TMESIHRWAWWFAVLCTFTGAIGILLT. H265 is a binding site for Fe cation.

This sequence belongs to the reaction center PufL/M/PsbA/D family. As to quaternary structure, reaction center is composed of four bacteriochlorophylls, two bacteriopheophytins, two ubiquinones, one iron, and three highly hydrophobic polypeptide chains (designated L, M, and H).

The protein localises to the cellular chromatophore membrane. In terms of biological role, the reaction center is a membrane-bound complex that mediates the initial photochemical event in the electron transfer process of photosynthesis. The polypeptide is Reaction center protein M chain (pufM) (Rhodospirillum rubrum).